Here is a 308-residue protein sequence, read N- to C-terminus: Glucan 1,3-beta-glucosidase ARB_02797 (308 aa).

The first 20 residues, 1-20 (MRFSTALSLALAVSPAAVFA), serve as a signal peptide directing secretion. Residue glutamate 120 is the Proton donor of the active site. The N-linked (GlcNAc...) asparagine glycan is linked to asparagine 126. The active-site Nucleophile is the glutamate 220.

Belongs to the glycosyl hydrolase 17 family.

It localises to the secreted. Its subcellular location is the cell wall. The protein localises to the cytoplasm. It carries out the reaction Successive hydrolysis of beta-D-glucose units from the non-reducing ends of (1-&gt;3)-beta-D-glucans, releasing alpha-glucose.. Cell wall glucan 1,3-beta-glucosidase involved in cell wall biosynthesis and virulence. Crucial for delivery of beta-1,3-glucan to the biofilm matrix and for accumulation of mature matrix biomass. The polypeptide is Glucan 1,3-beta-glucosidase ARB_02797 (Arthroderma benhamiae (strain ATCC MYA-4681 / CBS 112371) (Trichophyton mentagrophytes)).